A 310-amino-acid chain; its full sequence is Protoheme IX farnesyltransferase 2 (310 aa).

9 helical membrane-spanning segments follow: residues 21 to 41, 46 to 66, 99 to 119, 125 to 145, 153 to 173, 180 to 200, 226 to 246, 256 to 276, and 284 to 304; these read IWYLLVFTAFGAAVAASGIYG, IATWALMLFSVAAGSASANVL, FGLFLAGASMVMAACIALTTT, WAAAFIAFGLFNNVLVYSYML, IVLGGLCGGMPPMIGWVAVTT, GLVMGGLVFIWTPMHIWALTL, VIAVSTVAMALFSLAPLLITL, VYLATAAASGALIIALSAWVV, and AWVLFKFSSPYLAVLFIALMV.

The protein belongs to the UbiA prenyltransferase family. Protoheme IX farnesyltransferase subfamily.

The protein localises to the cell membrane. The catalysed reaction is heme b + (2E,6E)-farnesyl diphosphate + H2O = Fe(II)-heme o + diphosphate. It participates in porphyrin-containing compound metabolism; heme O biosynthesis; heme O from protoheme: step 1/1. In terms of biological role, converts heme B (protoheme IX) to heme O by substitution of the vinyl group on carbon 2 of heme B porphyrin ring with a hydroxyethyl farnesyl side group. The polypeptide is Protoheme IX farnesyltransferase 2 (Cenarchaeum symbiosum (strain A)).